The primary structure comprises 110 residues: Protein RnfH (110 aa).

Positions 86–110 are disordered; the sequence is RQRRVEKTRKAGSIEGRRWQNKDSR. The segment covering 100–110 has biased composition (basic and acidic residues); it reads EGRRWQNKDSR.

The protein belongs to the UPF0125 (RnfH) family.

The polypeptide is Protein RnfH (Paraburkholderia xenovorans (strain LB400)).